A 64-amino-acid polypeptide reads, in one-letter code: Prokaryotic ubiquitin-like protein Pup (64 aa).

A disordered region spans residues Met-1–Asp-37. Residues Ser-21–Tyr-58 form an ARC ATPase binding region. The stretch at Ala-23–Glu-52 forms a coiled coil. At Gln-64 the chain carries Deamidated glutamine. Gln-64 participates in a covalent cross-link: Isoglutamyl lysine isopeptide (Gln-Lys) (interchain with K-? in acceptor proteins).

This sequence belongs to the prokaryotic ubiquitin-like protein family. Strongly interacts with the proteasome-associated ATPase ARC through a hydrophobic interface; the interacting region of Pup lies in its C-terminal half. There is one Pup binding site per ARC hexamer ring. Post-translationally, is modified by deamidation of its C-terminal glutamine to glutamate by the deamidase Dop, a prerequisite to the subsequent pupylation process.

It functions in the pathway protein degradation; proteasomal Pup-dependent pathway. Functionally, protein modifier that is covalently attached to lysine residues of substrate proteins, thereby targeting them for proteasomal degradation. The tagging system is termed pupylation. This chain is Prokaryotic ubiquitin-like protein Pup, found in Mycobacterium tuberculosis (strain ATCC 25177 / H37Ra).